Here is a 141-residue protein sequence, read N- to C-terminus: uncharacterized protein (141 aa).

This is an uncharacterized protein from Human cytomegalovirus (strain AD169) (HHV-5).